Reading from the N-terminus, the 1324-residue chain is Ubiquitin carboxyl-terminal hydrolase 42 (1324 aa).

2 disordered regions span residues 1 to 38 (MTIV…SASW) and 63 to 87 (YSSS…DGIA). The segment covering 10–25 (SSDPSAYQNQPGSSEA) has biased composition (polar residues). The span at 63–80 (YSSSSVPDKSKPSPQKDQ) shows a compositional bias: low complexity. Serine 75 carries the post-translational modification Phosphoserine. In terms of domain architecture, USP spans 111–412 (AGLQNLGNTC…QAYVLFYIRS (302 aa)). The active-site Nucleophile is the cysteine 120. Histidine 371 (proton acceptor) is an active-site residue. Disordered regions lie at residues 452-494 (IGPQ…NRAS), 536-707 (QSQP…MPAP), 722-1026 (LSNK…RHRS), 1085-1131 (RAGL…HPDR), 1149-1254 (DRFH…VKDS), and 1275-1294 (GGFP…FREK). Residues 477–489 (PSSSMSSPNGNSS) are compositionally biased toward low complexity. At serine 483 the chain carries Phosphoserine. Polar residues predominate over residues 536-564 (QSQPNLHSNSLENPTKPVPSSTITNSAVQ). The segment covering 565–576 (STSNASTMSVSS) has biased composition (low complexity). The segment covering 586–603 (ESCSQPVMNGKSKLNSSV) has biased composition (polar residues). Serine 754 and serine 856 each carry phosphoserine. 5 stretches are compositionally biased toward basic and acidic residues: residues 938 to 974 (AKEK…SKTE), 984 to 1013 (CPRE…ERRS), 1101 to 1113 (RGCE…ERHR), 1149 to 1158 (DRFHEHENGK), and 1165 to 1191 (DSVE…EEPK). A Phosphoserine modification is found at serine 1181. The span at 1192–1206 (AKKHKKSKKKKKSKD) shows a compositional bias: basic residues. Residues 1207 to 1218 (KHRDRDSRHQQD) show a composition bias toward basic and acidic residues. 3 positions are modified to phosphoserine: serine 1219, serine 1222, and serine 1226. Over residues 1231–1245 (HRHKKKKKKKKRHSR) the composition is skewed to basic residues. Position 1247 is a phosphoserine (serine 1247).

The protein belongs to the peptidase C19 family. Broadly expressed.

It carries out the reaction Thiol-dependent hydrolysis of ester, thioester, amide, peptide and isopeptide bonds formed by the C-terminal Gly of ubiquitin (a 76-residue protein attached to proteins as an intracellular targeting signal).. Its function is as follows. Deubiquitinating enzyme which may play an important role during spermatogenesis. This is Ubiquitin carboxyl-terminal hydrolase 42 (USP42) from Homo sapiens (Human).